Consider the following 846-residue polypeptide: Leucine--tRNA ligase (846 aa).

The 'HIGH' region signature appears at 42-52 (PYPSGNLHMGH). The 'KMSKS' region motif lies at 586-590 (KMSKS). Lysine 589 lines the ATP pocket.

This sequence belongs to the class-I aminoacyl-tRNA synthetase family.

It localises to the cytoplasm. The catalysed reaction is tRNA(Leu) + L-leucine + ATP = L-leucyl-tRNA(Leu) + AMP + diphosphate. The sequence is that of Leucine--tRNA ligase from Heliobacterium modesticaldum (strain ATCC 51547 / Ice1).